We begin with the raw amino-acid sequence, 681 residues long: MADPSSYRPKPGEIPDSPGVYKFRDEHHRVIYVGKAKSLRQRLASYFQDLAGLHPRTRTMVTTAASVEWTVVSTEVEALQLEYSWIKEYDPRFNVKYRDDKSYPYLAVTMNEEFPRVQVMRGHKRKGVRYFGPYGHAWAIRDTVDLLLRVFPVRTCSAGVFKNAARTGRPCLLGYIGKCSAPCVERVSAEEHRELAEEFCDFMAGRTGTYIRRLERQMTDAAEEMEYEKAARLRDDIGALKKAMEKNAVVLADATDADLIAVAEDELEAAVQIFHVRGGRVRGQRGWVTDKVEAVTTADLVEHALQQLYGEETGDSVPKEVLVPALPDPVEPVQEWLTGRRGSIVSLRIPQRGDKKSLMETVQRNAQQSLALHKTKRASDLTTRSRALEEIAEALDLDSAPLRIECYDISHLQGDDVVASMVVFEDGLQRKSEYRRFQIKSFEGQDDVRSMHEVITRRFRRYLSEKERTGEWADGDLKDGELKDDEGRPKRFAYPPQLVVVDGGQPQVAAAKRALDELGIDDIAVCGLAKRLEEVWLPDDGDPVVLPRTSEGLYLLQRVRDEAHRFAITYQRTKRAKRFRASPLDDVAGLGETRKQALIKHFGSVKKLRSATIDQICEVPGIGRKTAETIAVAFAQAAPAVPAVNTATGEIMEDEEPGTTAGSSQEPVSAGTSDERRGQET.

Residues 16–95 (DSPGVYKFRD…IKEYDPRFNV (80 aa)) form the GIY-YIG domain. In terms of domain architecture, UVR spans 208–243 (GTYIRRLERQMTDAAEEMEYEKAARLRDDIGALKKA). Residues 650 to 681 (EIMEDEEPGTTAGSSQEPVSAGTSDERRGQET) form a disordered region. A compositionally biased stretch (polar residues) spans 660–672 (TAGSSQEPVSAGT).

It belongs to the UvrC family. In terms of assembly, interacts with UvrB in an incision complex.

Its subcellular location is the cytoplasm. The UvrABC repair system catalyzes the recognition and processing of DNA lesions. UvrC both incises the 5' and 3' sides of the lesion. The N-terminal half is responsible for the 3' incision and the C-terminal half is responsible for the 5' incision. This Streptomyces avermitilis (strain ATCC 31267 / DSM 46492 / JCM 5070 / NBRC 14893 / NCIMB 12804 / NRRL 8165 / MA-4680) protein is UvrABC system protein C.